We begin with the raw amino-acid sequence, 65 residues long: Large ribosomal subunit protein bL35 (65 aa).

Positions 1 to 16 are enriched in basic residues; it reads MPKQKTHRASAKRFKR. Residues 1-20 form a disordered region; sequence MPKQKTHRASAKRFKRTGSG.

Belongs to the bacterial ribosomal protein bL35 family.

The protein is Large ribosomal subunit protein bL35 of Streptococcus equi subsp. equi (strain 4047).